Here is a 64-residue protein sequence, read N- to C-terminus: Large ribosomal subunit protein bL32 (64 aa).

The disordered stretch occupies residues 1 to 23; sequence MAVQKSRVTPSRRGQRRSHDALA.

Belongs to the bacterial ribosomal protein bL32 family.

The polypeptide is Large ribosomal subunit protein bL32 (Xylella fastidiosa (strain M23)).